The primary structure comprises 90 residues: Putative membrane protein insertion efficiency factor (90 aa).

The protein belongs to the UPF0161 family.

Its subcellular location is the cell inner membrane. Could be involved in insertion of integral membrane proteins into the membrane. The sequence is that of Putative membrane protein insertion efficiency factor from Thermosynechococcus vestitus (strain NIES-2133 / IAM M-273 / BP-1).